A 121-amino-acid chain; its full sequence is Large ribosomal subunit protein bL20 (121 aa).

This sequence belongs to the bacterial ribosomal protein bL20 family.

In terms of biological role, binds directly to 23S ribosomal RNA and is necessary for the in vitro assembly process of the 50S ribosomal subunit. It is not involved in the protein synthesizing functions of that subunit. The sequence is that of Large ribosomal subunit protein bL20 from Orientia tsutsugamushi (strain Ikeda) (Rickettsia tsutsugamushi).